Consider the following 196-residue polypeptide: HTH-type transcriptional regulator BetI (196 aa).

The region spanning 8–68 is the HTH tetR-type domain; it reads PIRRSQLIAA…ATMRHLMQAL (61 aa). A DNA-binding region (H-T-H motif) is located at residues 31–50; it reads SIAYIARLAGVSNGIISHYF.

Its pathway is amine and polyamine biosynthesis; betaine biosynthesis via choline pathway [regulation]. Functionally, repressor involved in the biosynthesis of the osmoprotectant glycine betaine. It represses transcription of the choline transporter BetT and the genes of BetAB involved in the synthesis of glycine betaine. The protein is HTH-type transcriptional regulator BetI of Ectopseudomonas mendocina (strain ymp) (Pseudomonas mendocina).